Here is a 249-residue protein sequence, read N- to C-terminus: 3-deoxy-D-manno-octulosonic acid kinase (249 aa).

Residue Asp175 is part of the active site.

This sequence belongs to the protein kinase superfamily. KdkA/RfaP family.

The protein resides in the cell inner membrane. It carries out the reaction an alpha-Kdo-(2-&gt;6)-lipid IVA + ATP = a 4-O-phospho-alpha-Kdo-(2-&gt;6)-lipid IVA + ADP + H(+). It functions in the pathway bacterial outer membrane biogenesis; LPS core biosynthesis. Functionally, catalyzes the ATP-dependent phosphorylation of the 3-deoxy-D-manno-octulosonic acid (Kdo) residue in Kdo-lipid IV(A) at the 4-OH position. The sequence is that of 3-deoxy-D-manno-octulosonic acid kinase from Stenotrophomonas maltophilia (strain R551-3).